The primary structure comprises 666 residues: Protein-arginine deiminase type-4 (666 aa).

Ca(2+) contacts are provided by Asn153, Asp155, Asp165, Asp168, Asp176, and Asp179. Arg212 and Arg218 each carry citrulline. Gln349 serves as a coordination point for Ca(2+). Asp350 is a catalytic residue. The Ca(2+) site is built by Glu351, Glu353, Asp369, and Ser370. A citrulline mark is found at Arg372, Arg374, and Arg383. Position 374 (Arg374) interacts with substrate. Residues Phe407, Leu410, and Glu411 each coordinate Ca(2+). Catalysis depends on residues His471, Asp473, and Cys648.

Belongs to the protein arginine deiminase family. Ca(2+) serves as cofactor. In terms of processing, autocitrullination at Arg-372 and Arg-374 inactivates the enzyme. Epidermis.

Its subcellular location is the cytoplasm. The protein localises to the nucleus. It localises to the cytoplasmic granule. The catalysed reaction is L-arginyl-[protein] + H2O = L-citrullyl-[protein] + NH4(+). In terms of biological role, catalyzes the citrullination/deimination of arginine residues of proteins such as histones, thereby playing a key role in histone code and regulation of stem cell maintenance. Citrullinates histone H1 at 'Arg-54' (to form H1R54ci), histone H3 at 'Arg-2', 'Arg-8', 'Arg-17' and/or 'Arg-26' (to form H3R2ci, H3R8ci, H3R17ci, H3R26ci, respectively) and histone H4 at 'Arg-3' (to form H4R3ci). Acts as a key regulator of stem cell maintenance by mediating citrullination of histone H1: citrullination of 'Arg-54' of histone H1 (H1R54ci) results in H1 displacement from chromatin and global chromatin decondensation, thereby promoting pluripotency and stem cell maintenance. Promotes profound chromatin decondensation during the innate immune response to infection in neutrophils by mediating formation of H1R54ci. Required for the formation of neutrophil extracellular traps (NETs); NETs are mainly composed of DNA fibers and are released by neutrophils to bind pathogens during inflammation. Citrullination of histone H3 prevents their methylation by CARM1 and HRMT1L2/PRMT1 and represses transcription. Citrullinates EP300/P300 at 'Arg-2142', which favors its interaction with NCOA2/GRIP1. The sequence is that of Protein-arginine deiminase type-4 (Padi4) from Rattus norvegicus (Rat).